The chain runs to 435 residues: T-box transcription factor T (435 aa).

The segment at residues leucine 51–aspartate 219 is a DNA-binding region (T-box). Disordered regions lie at residues proline 280–cysteine 310 and alanine 384–aspartate 412. Residues arginine 297–cysteine 310 show a composition bias toward polar residues.

As to quaternary structure, monomer. Binds DNA as a monomer.

Its subcellular location is the nucleus. Involved in the transcriptional regulation of genes required for mesoderm formation and differentiation. Binds to a palindromic site (called T site) and activates gene transcription when bound to such a site. In Canis lupus familiaris (Dog), this protein is T-box transcription factor T.